The primary structure comprises 468 residues: UDP-N-acetylmuramate--L-alanine ligase (468 aa).

114–120 (GTHGKTT) lines the ATP pocket.

It belongs to the MurCDEF family.

The protein resides in the cytoplasm. It catalyses the reaction UDP-N-acetyl-alpha-D-muramate + L-alanine + ATP = UDP-N-acetyl-alpha-D-muramoyl-L-alanine + ADP + phosphate + H(+). It functions in the pathway cell wall biogenesis; peptidoglycan biosynthesis. Functionally, cell wall formation. This chain is UDP-N-acetylmuramate--L-alanine ligase, found in Methylobacterium radiotolerans (strain ATCC 27329 / DSM 1819 / JCM 2831 / NBRC 15690 / NCIMB 10815 / 0-1).